A 267-amino-acid polypeptide reads, in one-letter code: NAD kinase (267 aa).

The active-site Proton acceptor is Asp45. NAD(+) contacts are provided by residues 45–46, 121–122, Lys147, Asp149, 160–165, and Ala184; these read DG, NE, and TAYSKS.

The protein belongs to the NAD kinase family. It depends on a divalent metal cation as a cofactor.

It is found in the cytoplasm. It catalyses the reaction NAD(+) + ATP = ADP + NADP(+) + H(+). Functionally, involved in the regulation of the intracellular balance of NAD and NADP, and is a key enzyme in the biosynthesis of NADP. Catalyzes specifically the phosphorylation on 2'-hydroxyl of the adenosine moiety of NAD to yield NADP. The sequence is that of NAD kinase from Lactobacillus gasseri (strain ATCC 33323 / DSM 20243 / BCRC 14619 / CIP 102991 / JCM 1131 / KCTC 3163 / NCIMB 11718 / NCTC 13722 / AM63).